The sequence spans 560 residues: Beta-hexosaminidase subunit B1 (560 aa).

An N-terminal signal peptide occupies residues 1 to 25 (MIILKRNIVFLLIIIIVLGIFIATS). 7 N-linked (GlcNAc...) asparagine glycosylation sites follow: Asn59, Asn69, Asn81, Asn99, Asn161, Asn293, and Asn346. The active-site Proton donor is Glu359. Residues Asn366, Asn436, Asn472, and Asn547 are each glycosylated (N-linked (GlcNAc...) asparagine).

The protein belongs to the glycosyl hydrolase 20 family.

The protein resides in the lysosome. The enzyme catalyses Hydrolysis of terminal non-reducing N-acetyl-D-hexosamine residues in N-acetyl-beta-D-hexosaminides.. Functionally, responsible for the degradation of GM2 gangliosides, and a variety of other molecules containing terminal N-acetyl hexosamines. This Dictyostelium discoideum (Social amoeba) protein is Beta-hexosaminidase subunit B1 (hexb1).